A 98-amino-acid polypeptide reads, in one-letter code: ATP synthase subunit c (98 aa).

The next 2 helical transmembrane spans lie at 27–47 (ALALSAPFAVGLAALGSGLGL) and 73–93 (IIGAALIEALTIYALIVFFVV).

The protein belongs to the ATPase C chain family. F-type ATPases have 2 components, F(1) - the catalytic core - and F(0) - the membrane proton channel. F(1) has five subunits: alpha(3), beta(3), gamma(1), delta(1), epsilon(1). F(0) has three main subunits: a(1), b(2) and c(10-14). The alpha and beta chains form an alternating ring which encloses part of the gamma chain. F(1) is attached to F(0) by a central stalk formed by the gamma and epsilon chains, while a peripheral stalk is formed by the delta and b chains.

It localises to the cell inner membrane. Functionally, f(1)F(0) ATP synthase produces ATP from ADP in the presence of a proton or sodium gradient. F-type ATPases consist of two structural domains, F(1) containing the extramembraneous catalytic core and F(0) containing the membrane proton channel, linked together by a central stalk and a peripheral stalk. During catalysis, ATP synthesis in the catalytic domain of F(1) is coupled via a rotary mechanism of the central stalk subunits to proton translocation. In terms of biological role, key component of the F(0) channel; it plays a direct role in translocation across the membrane. A homomeric c-ring of between 10-14 subunits forms the central stalk rotor element with the F(1) delta and epsilon subunits. The polypeptide is ATP synthase subunit c (Protochlamydia amoebophila (strain UWE25)).